Here is a 204-residue protein sequence, read N- to C-terminus: Somatotropin (204 aa).

The N-terminal stretch at 1–17 (MDRVVLLLSVLSLGVSS) is a signal peptide. Pyrrolidone carboxylic acid is present on Gln18. Zn(2+) is bound at residue His36. An intrachain disulfide couples Cys69 to Cys177. Glu186 contacts Zn(2+). Cys194 and Cys202 are disulfide-bonded.

This sequence belongs to the somatotropin/prolactin family.

It localises to the secreted. Functionally, growth hormone plays an important role in growth control and is involved in the regulation of several anabolic processes. Implicated as an osmoregulatory substance important for seawater adaptation. The sequence is that of Somatotropin (gh) from Lates calcarifer (Barramundi).